A 312-amino-acid polypeptide reads, in one-letter code: MSSACDHETEASHVNIPETTPEENGSNSSTPTSEIGPACVVSPAPGETGAPPPKRRRPCGLPQGVALINTSVSTHPLFTTSCQSSWEDVEREFNIAPSWRPILEREMQQPYVRLLLNEYKLRCASEEVFPPKEDIFAWTRFSPPEKVRVVIVGQDPYHAPGQAHGLAFSVRKGVPVPPSLRNIYSAVQKSYPSFRHPMHGFLERWAEQGVLLINTTLTVARGKPGSHATLGWHRLVRAVIDRLCTTSQGLVFMLWGAHAQKSCSPNRQHHLVLTYGHPSPLSRVNFRDCPHFLEANAYLTKTGRKPVDWQIE.

Positions 1-11 (MSSACDHETEA) are enriched in basic and acidic residues. The tract at residues 1-61 (MSSACDHETE…PPKRRRPCGL (61 aa)) is disordered. The span at 22–33 (EENGSNSSTPTS) shows a compositional bias: polar residues. Catalysis depends on D155, which acts as the Proton acceptor.

This sequence belongs to the uracil-DNA glycosylase (UDG) superfamily. UNG family.

The protein localises to the host nucleus. The enzyme catalyses Hydrolyzes single-stranded DNA or mismatched double-stranded DNA and polynucleotides, releasing free uracil.. Its function is as follows. Excises uracil residues from the DNA which can arise as a result of misincorporation of dUMP residues by DNA polymerase or deamination of cytosines. Therefore may reduce deleterious uracil incorporation into the viral genome, particularly in terminally differentiated cells which lack DNA repair enzymes. The polypeptide is Uracil-DNA glycosylase (61) (Equine herpesvirus 1 (strain V592) (EHV-1)).